The primary structure comprises 91 residues: DNA-directed RNA polymerase subunit omega (91 aa).

This sequence belongs to the RNA polymerase subunit omega family. In terms of assembly, the RNAP catalytic core consists of 2 alpha, 1 beta, 1 beta' and 1 omega subunit. When a sigma factor is associated with the core the holoenzyme is formed, which can initiate transcription.

It catalyses the reaction RNA(n) + a ribonucleoside 5'-triphosphate = RNA(n+1) + diphosphate. Functionally, promotes RNA polymerase assembly. Latches the N- and C-terminal regions of the beta' subunit thereby facilitating its interaction with the beta and alpha subunits. This Yersinia pestis bv. Antiqua (strain Antiqua) protein is DNA-directed RNA polymerase subunit omega.